An 81-amino-acid chain; its full sequence is Sec-independent protein translocase protein TatA (81 aa).

The chain crosses the membrane as a helical span at residues 1–21; sequence MGGISVWQLLIIAVIVVLLFG. Residues 42 to 81 are disordered; sequence AMSDEDSAKNEKDADFEPKSLEKQQQKEAAPETKKDKEQA.

The protein belongs to the TatA/E family. As to quaternary structure, the Tat system comprises two distinct complexes: a TatABC complex, containing multiple copies of TatA, TatB and TatC subunits, and a separate TatA complex, containing only TatA subunits. Substrates initially bind to the TatABC complex, which probably triggers association of the separate TatA complex to form the active translocon.

Its subcellular location is the cell inner membrane. Functionally, part of the twin-arginine translocation (Tat) system that transports large folded proteins containing a characteristic twin-arginine motif in their signal peptide across membranes. TatA could form the protein-conducting channel of the Tat system. This Vibrio parahaemolyticus serotype O3:K6 (strain RIMD 2210633) protein is Sec-independent protein translocase protein TatA.